A 341-amino-acid chain; its full sequence is MKNYLIEIKKLSKNFLHSSSQHSTYALKDIDLAIPAGCIYGIIGMSGAGKSTLLRCINGLEAPSKGDILIEGKSLFQKNPAALRAIRQKMGMVFQHFQLFSSRTVAENIAYPMEIGFISQVFQEERINQLLNLVGLEQKKEIYPTSLSGGEKQRVGIARALANHPHILLCDEPTSALDPKTTRSILQLLAELNQKFGLTIIIITHQLETVKQICHRVAVLSEGEIVEEGEVKQVFIRPQHQATRHLLHLDGDQIPVDLIQQRNPDKLLVRLGFEGNQAKEPIISQLIKQFDIEVNILSGGLDYLQKTIVGNLFVEISGLPQNIQKAQAFLKSKQIICEIIL.

The ABC transporter domain occupies 6–247 (IEIKKLSKNF…PQHQATRHLL (242 aa)). 44-51 (GMSGAGKS) contributes to the ATP binding site.

This sequence belongs to the ABC transporter superfamily. Methionine importer (TC 3.A.1.24) family. As to quaternary structure, the complex is composed of two ATP-binding proteins (MetN), two transmembrane proteins (MetI) and a solute-binding protein (MetQ).

Its subcellular location is the cell inner membrane. It catalyses the reaction L-methionine(out) + ATP + H2O = L-methionine(in) + ADP + phosphate + H(+). It carries out the reaction D-methionine(out) + ATP + H2O = D-methionine(in) + ADP + phosphate + H(+). In terms of biological role, part of the ABC transporter complex MetNIQ involved in methionine import. Responsible for energy coupling to the transport system. This chain is Methionine import ATP-binding protein MetN, found in Protochlamydia amoebophila (strain UWE25).